The sequence spans 305 residues: DNA-directed RNA polymerase 35 kDa subunit (305 aa).

It belongs to the poxviridae DNA-directed RNA polymerase 35 kDa subunit family. The DNA-dependent RNA polymerase used for intermediate and late genes expression consists of eight subunits 147 kDa, 133 kDa, 35 kDa, 30 kDa, 22 kDa, 19 kDa, 18 kDa and 7 kDa totalling more than 500 kDa in mass. The same holoenzyme, with the addition of the transcription-specificity factor RAP94, is used for early gene expression.

The protein localises to the virion. It catalyses the reaction RNA(n) + a ribonucleoside 5'-triphosphate = RNA(n+1) + diphosphate. In terms of biological role, part of the DNA-dependent RNA polymerase which catalyzes the transcription of viral DNA into RNA using the four ribonucleoside triphosphates as substrates. Responsible for the transcription of early, intermediate and late genes. DNA-dependent RNA polymerase associates with the early transcription factor (ETF), itself composed of D6 and A7, thereby allowing the early genes transcription. Late transcription, and probably also intermediate transcription, require newly synthesized RNA polymerase. In Homo sapiens (Human), this protein is DNA-directed RNA polymerase 35 kDa subunit (RPO35).